Here is a 583-residue protein sequence, read N- to C-terminus: Protein cps3 (583 aa).

2 consecutive C3H1-type zinc fingers follow at residues 35-62 (SLQHVPCKFFRQGTCTSGKNCIFSHDLE) and 64-91 (ATEKTICKYFQKGNCKFGSKCALEHVLP). Disordered regions lie at residues 318–346 (LGRPTKSPSVPTSVGSNKSRKFPGINGST), 471–490 (KVSSNLNSGNPTPYNSYNGT), and 504–532 (RQESEKATPPSLNKVSQEPLTATTPKNLG). 3 stretches are compositionally biased toward polar residues: residues 323 to 334 (KSPSVPTSVGSN), 475 to 490 (NLNSGNPTPYNSYNGT), and 513 to 532 (PSLNKVSQEPLTATTPKNLG).

It is found in the cytoplasm. Responsible for supersensitivity to the spindle poison, isopropyl N-3-chlorophenyl carbamate. Has a role in meiosis. In Schizosaccharomyces pombe (strain 972 / ATCC 24843) (Fission yeast), this protein is Protein cps3 (cps3).